Consider the following 416-residue polypeptide: 1-deoxy-D-xylulose 5-phosphate reductoisomerase (416 aa).

NADPH contacts are provided by threonine 10, glycine 11, serine 12, isoleucine 13, glycine 36, arginine 37, asparagine 38, and asparagine 130. Lysine 131 is a binding site for 1-deoxy-D-xylulose 5-phosphate. Glutamate 132 contacts NADPH. Mn(2+) is bound at residue aspartate 156. 1-deoxy-D-xylulose 5-phosphate contacts are provided by serine 157, glutamate 158, serine 194, and histidine 217. Glutamate 158 is a Mn(2+) binding site. Residue glycine 223 coordinates NADPH. The 1-deoxy-D-xylulose 5-phosphate site is built by serine 230, asparagine 235, lysine 236, and glutamate 239. Glutamate 239 is a Mn(2+) binding site.

Belongs to the DXR family. Mg(2+) serves as cofactor. It depends on Mn(2+) as a cofactor.

It carries out the reaction 2-C-methyl-D-erythritol 4-phosphate + NADP(+) = 1-deoxy-D-xylulose 5-phosphate + NADPH + H(+). It participates in isoprenoid biosynthesis; isopentenyl diphosphate biosynthesis via DXP pathway; isopentenyl diphosphate from 1-deoxy-D-xylulose 5-phosphate: step 1/6. Catalyzes the NADPH-dependent rearrangement and reduction of 1-deoxy-D-xylulose-5-phosphate (DXP) to 2-C-methyl-D-erythritol 4-phosphate (MEP). This chain is 1-deoxy-D-xylulose 5-phosphate reductoisomerase, found in Synechococcus sp. (strain CC9311).